A 416-amino-acid chain; its full sequence is UDP-N-acetylglucosamine 1-carboxyvinyltransferase (416 aa).

22–23 contributes to the phosphoenolpyruvate binding site; that stretch reads KN. A UDP-N-acetyl-alpha-D-glucosamine-binding site is contributed by arginine 91. Cysteine 115 (proton donor) is an active-site residue. 2-(S-cysteinyl)pyruvic acid O-phosphothioketal is present on cysteine 115. UDP-N-acetyl-alpha-D-glucosamine contacts are provided by aspartate 304 and isoleucine 326.

This sequence belongs to the EPSP synthase family. MurA subfamily.

The protein resides in the cytoplasm. The enzyme catalyses phosphoenolpyruvate + UDP-N-acetyl-alpha-D-glucosamine = UDP-N-acetyl-3-O-(1-carboxyvinyl)-alpha-D-glucosamine + phosphate. It functions in the pathway cell wall biogenesis; peptidoglycan biosynthesis. Its function is as follows. Cell wall formation. Adds enolpyruvyl to UDP-N-acetylglucosamine. This is UDP-N-acetylglucosamine 1-carboxyvinyltransferase from Thermodesulfovibrio yellowstonii (strain ATCC 51303 / DSM 11347 / YP87).